Consider the following 308-residue polypeptide: Glucan 1,3-beta-glucosidase (308 aa).

A signal peptide spans 1-18 (MQIKFLTTLATVLTSVAA). Residue E119 is the Proton donor of the active site. Residue N197 is glycosylated (N-linked (GlcNAc...) asparagine). The active-site Nucleophile is E228.

Belongs to the glycosyl hydrolase 17 family.

The protein localises to the secreted. Its subcellular location is the cell wall. The enzyme catalyses Successive hydrolysis of beta-D-glucose units from the non-reducing ends of (1-&gt;3)-beta-D-glucans, releasing alpha-glucose.. The polypeptide is Glucan 1,3-beta-glucosidase (BGL2) (Candida albicans (Yeast)).